The primary structure comprises 304 residues: ATP phosphoribosyltransferase (304 aa).

Belongs to the ATP phosphoribosyltransferase family. Long subfamily. Mg(2+) is required as a cofactor.

Its subcellular location is the cytoplasm. The enzyme catalyses 1-(5-phospho-beta-D-ribosyl)-ATP + diphosphate = 5-phospho-alpha-D-ribose 1-diphosphate + ATP. Its pathway is amino-acid biosynthesis; L-histidine biosynthesis; L-histidine from 5-phospho-alpha-D-ribose 1-diphosphate: step 1/9. With respect to regulation, feedback inhibited by histidine. Catalyzes the condensation of ATP and 5-phosphoribose 1-diphosphate to form N'-(5'-phosphoribosyl)-ATP (PR-ATP). Has a crucial role in the pathway because the rate of histidine biosynthesis seems to be controlled primarily by regulation of HisG enzymatic activity. This chain is ATP phosphoribosyltransferase, found in Xanthomonas campestris pv. campestris (strain 8004).